A 49-amino-acid chain; its full sequence is Large ribosomal subunit protein bL33 (49 aa).

It belongs to the bacterial ribosomal protein bL33 family.

The sequence is that of Large ribosomal subunit protein bL33 from Carboxydothermus hydrogenoformans (strain ATCC BAA-161 / DSM 6008 / Z-2901).